The chain runs to 170 residues: ATP synthase subunit b (170 aa).

Residues 30–50 (FFFVLAIFLVVLGVIGTFVVP) form a helical membrane-spanning segment.

Belongs to the ATPase B chain family. F-type ATPases have 2 components, F(1) - the catalytic core - and F(0) - the membrane proton channel. F(1) has five subunits: alpha(3), beta(3), gamma(1), delta(1), epsilon(1). F(0) has three main subunits: a(1), b(2) and c(10-14). The alpha and beta chains form an alternating ring which encloses part of the gamma chain. F(1) is attached to F(0) by a central stalk formed by the gamma and epsilon chains, while a peripheral stalk is formed by the delta and b chains.

It localises to the cell membrane. In terms of biological role, f(1)F(0) ATP synthase produces ATP from ADP in the presence of a proton or sodium gradient. F-type ATPases consist of two structural domains, F(1) containing the extramembraneous catalytic core and F(0) containing the membrane proton channel, linked together by a central stalk and a peripheral stalk. During catalysis, ATP synthesis in the catalytic domain of F(1) is coupled via a rotary mechanism of the central stalk subunits to proton translocation. Functionally, component of the F(0) channel, it forms part of the peripheral stalk, linking F(1) to F(0). The polypeptide is ATP synthase subunit b (Mycobacterium leprae (strain TN)).